Consider the following 87-residue polypeptide: Small ribosomal subunit protein bS20 (87 aa).

This sequence belongs to the bacterial ribosomal protein bS20 family.

In terms of biological role, binds directly to 16S ribosomal RNA. In Rickettsia bellii (strain OSU 85-389), this protein is Small ribosomal subunit protein bS20.